A 341-amino-acid chain; its full sequence is Tetraacyldisaccharide 4'-kinase (341 aa).

64 to 71 (AVGGSGKT) provides a ligand contact to ATP.

It belongs to the LpxK family.

The catalysed reaction is a lipid A disaccharide + ATP = a lipid IVA + ADP + H(+). It functions in the pathway glycolipid biosynthesis; lipid IV(A) biosynthesis; lipid IV(A) from (3R)-3-hydroxytetradecanoyl-[acyl-carrier-protein] and UDP-N-acetyl-alpha-D-glucosamine: step 6/6. In terms of biological role, transfers the gamma-phosphate of ATP to the 4'-position of a tetraacyldisaccharide 1-phosphate intermediate (termed DS-1-P) to form tetraacyldisaccharide 1,4'-bis-phosphate (lipid IVA). This chain is Tetraacyldisaccharide 4'-kinase, found in Azoarcus sp. (strain BH72).